The following is a 792-amino-acid chain: Starch synthase 2, chloroplastic/amyloplastic (792 aa).

The N-terminal 55 residues, 1 to 55 (MASVAESSFPLLCQIKTQRRINSSTLRHSRVSYHDLPSGSLSFRSRSFVLGHRCK), are a transit peptide targeting the chloroplast. The segment at 105–295 (IKESTPDLDD…GKDEEKPPPL (191 aa)) is disordered. The span at 145 to 156 (GSVSPSTYGKSS) shows a compositional bias: polar residues. Residues 179–192 (SSASVISSSPVTSP) show a composition bias toward low complexity. The span at 221 to 233 (SVMTSPEKTSDPV) shows a compositional bias: polar residues. Positions 266 to 275 (KTEKYVEKTP) are enriched in basic and acidic residues. Residue Lys315 coordinates ADP-alpha-D-glucose.

The protein belongs to the glycosyltransferase 1 family. Bacterial/plant glycogen synthase subfamily. As to expression, expressed in roots, leaves and flowers.

It localises to the plastid. The protein resides in the chloroplast. It is found in the amyloplast. The catalysed reaction is [(1-&gt;4)-alpha-D-glucosyl](n) + ADP-alpha-D-glucose = [(1-&gt;4)-alpha-D-glucosyl](n+1) + ADP + H(+). It functions in the pathway glycan biosynthesis; starch biosynthesis. Its function is as follows. Involved in the synthesis of glycan chains within amylopectin in leaves. Is required to produce chains with a degree of polymerization of 12 to 25 (DP12-DP25). The chain is Starch synthase 2, chloroplastic/amyloplastic (SS2) from Arabidopsis thaliana (Mouse-ear cress).